We begin with the raw amino-acid sequence, 67 residues long: Small ribosomal subunit protein bS21 (67 aa).

This sequence belongs to the bacterial ribosomal protein bS21 family.

The chain is Small ribosomal subunit protein bS21 from Desulfovibrio desulfuricans (strain ATCC 27774 / DSM 6949 / MB).